The chain runs to 47 residues: Delta-actitoxin-Aspp1a (47 aa).

3 disulfides stabilise this stretch: Cys4–Cys44, Cys6–Cys34, and Cys27–Cys45.

It belongs to the sea anemone sodium channel inhibitory toxin family. Type I subfamily.

The protein localises to the secreted. It is found in the nematocyst. Functionally, binds specifically to voltage-gated sodium channels (Nav) (site 3), thereby delaying their inactivation during signal transduction. Has a heart stimulation effect on isolated rat atria that is higher than that of Hk7a, Hk8a and Hk16a. The protein is Delta-actitoxin-Aspp1a of Anthopleura sp. (strain 'Zhanjiang') (Sea anemone).